We begin with the raw amino-acid sequence, 545 residues long: Cryptochrome-1 (545 aa).

Positions 3-138 (VNNILWFRHG…KCVEKVSHTL (136 aa)) constitute a Photolyase/cryptochrome alpha/beta domain. FAD is bound by residues arginine 236, serine 264, serine 266, glutamine 307, histidine 374, 406–408 (DAD), cysteine 412, and asparagine 415.

Belongs to the DNA photolyase class-1 family. As to quaternary structure, interacts with tim and per; promoted by light conditions. Requires FAD as cofactor.

The protein resides in the cytoplasm. It localises to the perinuclear region. Its subcellular location is the nucleus. Its function is as follows. Blue light-dependent regulator that is the input of the circadian feedback loop. Has no photolyase activity for cyclobutane pyrimidine dimers or 6-4 photoproducts. Regulation of expression by light suggests a role in photoreception for locomotor activity rhythms. Functions, together with per, as a transcriptional repressor required for the oscillation of peripheral circadian clocks and for the correct specification of clock cells. Genes directly activated by the transcription factors Clock (Clk) and cycle (cyc) are repressed by cry. The protein is Cryptochrome-1 of Aedes aegypti (Yellowfever mosquito).